The primary structure comprises 274 residues: Tryptophan synthase alpha chain (274 aa).

Catalysis depends on proton acceptor residues Glu49 and Asp60.

The protein belongs to the TrpA family. Tetramer of two alpha and two beta chains.

It carries out the reaction (1S,2R)-1-C-(indol-3-yl)glycerol 3-phosphate + L-serine = D-glyceraldehyde 3-phosphate + L-tryptophan + H2O. It functions in the pathway amino-acid biosynthesis; L-tryptophan biosynthesis; L-tryptophan from chorismate: step 5/5. Its function is as follows. The alpha subunit is responsible for the aldol cleavage of indoleglycerol phosphate to indole and glyceraldehyde 3-phosphate. The sequence is that of Tryptophan synthase alpha chain from Alkalilimnicola ehrlichii (strain ATCC BAA-1101 / DSM 17681 / MLHE-1).